Here is a 72-residue protein sequence, read N- to C-terminus: Translation initiation factor IF-1 (72 aa).

Positions 1-72 (MAKDDVIEVE…TRGRITYRYK (72 aa)) constitute an S1-like domain. Position 60 is a phosphotyrosine (Tyr-60).

Belongs to the IF-1 family. As to quaternary structure, component of the 30S ribosomal translation pre-initiation complex which assembles on the 30S ribosome in the order IF-2 and IF-3, IF-1 and N-formylmethionyl-tRNA(fMet); mRNA recruitment can occur at any time during PIC assembly.

It is found in the cytoplasm. One of the essential components for the initiation of protein synthesis. Stabilizes the binding of IF-2 and IF-3 on the 30S subunit to which N-formylmethionyl-tRNA(fMet) subsequently binds. Helps modulate mRNA selection, yielding the 30S pre-initiation complex (PIC). Upon addition of the 50S ribosomal subunit IF-1, IF-2 and IF-3 are released leaving the mature 70S translation initiation complex. The protein is Translation initiation factor IF-1 of Oceanobacillus iheyensis (strain DSM 14371 / CIP 107618 / JCM 11309 / KCTC 3954 / HTE831).